Here is a 387-residue protein sequence, read N- to C-terminus: Formate-dependent phosphoribosylglycinamide formyltransferase (387 aa).

Residues 12–13 (EL) and Glu72 contribute to the N(1)-(5-phospho-beta-D-ribosyl)glycinamide site. ATP-binding positions include Arg104, Lys145, 150–155 (SSGKGQ), 185–188 (EEFI), and Glu193. Residues 109 to 300 (DLAARELGLA…EFELHLRAVL (192 aa)) enclose the ATP-grasp domain. The Mg(2+) site is built by Glu258 and Glu270. Residues Asp277, Lys347, and 354 to 355 (RR) each bind N(1)-(5-phospho-beta-D-ribosyl)glycinamide.

Belongs to the PurK/PurT family. As to quaternary structure, homodimer.

It catalyses the reaction N(1)-(5-phospho-beta-D-ribosyl)glycinamide + formate + ATP = N(2)-formyl-N(1)-(5-phospho-beta-D-ribosyl)glycinamide + ADP + phosphate + H(+). The protein operates within purine metabolism; IMP biosynthesis via de novo pathway; N(2)-formyl-N(1)-(5-phospho-D-ribosyl)glycinamide from N(1)-(5-phospho-D-ribosyl)glycinamide (formate route): step 1/1. Functionally, involved in the de novo purine biosynthesis. Catalyzes the transfer of formate to 5-phospho-ribosyl-glycinamide (GAR), producing 5-phospho-ribosyl-N-formylglycinamide (FGAR). Formate is provided by PurU via hydrolysis of 10-formyl-tetrahydrofolate. This Anaeromyxobacter dehalogenans (strain 2CP-C) protein is Formate-dependent phosphoribosylglycinamide formyltransferase.